A 53-amino-acid chain; its full sequence is Non-classical export protein 1 (53 aa).

The chain crosses the membrane as a helical span at residues 7-29 (FLLGKFSDPLLAIMVGCLSYYVY).

This sequence belongs to the NCE101 family.

It localises to the membrane. Its function is as follows. Involved in a novel pathway of export of proteins that lack a cleavable signal sequence. May be part of the export machinery or may also be a substrate for non-classical export. This Saccharomyces cerevisiae (strain ATCC 204508 / S288c) (Baker's yeast) protein is Non-classical export protein 1 (NCE101).